Reading from the N-terminus, the 167-residue chain is MLKKIISAIALIAGTSGVVNAGNWQYKSLDVNVNIEQNFIPDIDSAVRIIPVNYDSDPKLDSQLYTVEMTIPAGVSAVKIAPTDSLTSSGQQIGKLVNVNNPDQNMNYYIRKDSGAGNFMAGQKGSFPVKENTSYTFSAIYTGGEYPNSGYSSGTYAGNLTVSFYSN.

The N-terminal stretch at 1-21 (MLKKIISAIALIAGTSGVVNA) is a signal peptide.

It is found in the fimbrium. The polypeptide is CS6 fimbrial subunit B (cssB) (Escherichia coli).